Reading from the N-terminus, the 339-residue chain is Glycerol-3-phosphate dehydrogenase [NAD(P)+] (339 aa).

Positions 15, 16, 36, and 110 each coordinate NADPH. Sn-glycerol 3-phosphate-binding residues include Lys110, Gly139, and Thr141. An NADPH-binding site is contributed by Ala143. Sn-glycerol 3-phosphate is bound by residues Lys195, Asp248, Ser258, Arg259, and Asn260. Lys195 acts as the Proton acceptor in catalysis. NADPH is bound at residue Arg259. Val283 and Glu285 together coordinate NADPH.

It belongs to the NAD-dependent glycerol-3-phosphate dehydrogenase family.

It is found in the cytoplasm. It carries out the reaction sn-glycerol 3-phosphate + NAD(+) = dihydroxyacetone phosphate + NADH + H(+). The catalysed reaction is sn-glycerol 3-phosphate + NADP(+) = dihydroxyacetone phosphate + NADPH + H(+). It functions in the pathway membrane lipid metabolism; glycerophospholipid metabolism. Catalyzes the reduction of the glycolytic intermediate dihydroxyacetone phosphate (DHAP) to sn-glycerol 3-phosphate (G3P), the key precursor for phospholipid synthesis. The sequence is that of Glycerol-3-phosphate dehydrogenase [NAD(P)+] from Salmonella agona (strain SL483).